The following is a 264-amino-acid chain: S-adenosylmethionine decarboxylase proenzyme (264 aa).

Residue S113 is the Schiff-base intermediate with substrate; via pyruvic acid of the active site. At S113 the chain carries Pyruvic acid (Ser); by autocatalysis. H118 (proton acceptor; for processing activity) is an active-site residue. The Proton donor; for catalytic activity role is filled by C141.

It belongs to the prokaryotic AdoMetDC family. Type 2 subfamily. In terms of assembly, heterooctamer of four alpha and four beta chains arranged as a tetramer of alpha/beta heterodimers. Requires pyruvate as cofactor. In terms of processing, is synthesized initially as an inactive proenzyme. Formation of the active enzyme involves a self-maturation process in which the active site pyruvoyl group is generated from an internal serine residue via an autocatalytic post-translational modification. Two non-identical subunits are generated from the proenzyme in this reaction, and the pyruvate is formed at the N-terminus of the alpha chain, which is derived from the carboxyl end of the proenzyme. The post-translation cleavage follows an unusual pathway, termed non-hydrolytic serinolysis, in which the side chain hydroxyl group of the serine supplies its oxygen atom to form the C-terminus of the beta chain, while the remainder of the serine residue undergoes an oxidative deamination to produce ammonia and the pyruvoyl group blocking the N-terminus of the alpha chain.

The enzyme catalyses S-adenosyl-L-methionine + H(+) = S-adenosyl 3-(methylsulfanyl)propylamine + CO2. It functions in the pathway amine and polyamine biosynthesis; S-adenosylmethioninamine biosynthesis; S-adenosylmethioninamine from S-adenosyl-L-methionine: step 1/1. Catalyzes the decarboxylation of S-adenosylmethionine to S-adenosylmethioninamine (dcAdoMet), the propylamine donor required for the synthesis of the polyamines spermine and spermidine from the diamine putrescine. The chain is S-adenosylmethionine decarboxylase proenzyme from Azotobacter vinelandii (strain DJ / ATCC BAA-1303).